The primary structure comprises 207 residues: Imidazoleglycerol-phosphate dehydratase (207 aa).

This sequence belongs to the imidazoleglycerol-phosphate dehydratase family.

It localises to the cytoplasm. It catalyses the reaction D-erythro-1-(imidazol-4-yl)glycerol 3-phosphate = 3-(imidazol-4-yl)-2-oxopropyl phosphate + H2O. It functions in the pathway amino-acid biosynthesis; L-histidine biosynthesis; L-histidine from 5-phospho-alpha-D-ribose 1-diphosphate: step 6/9. This Mycobacterium avium (strain 104) protein is Imidazoleglycerol-phosphate dehydratase.